The chain runs to 249 residues: tRNA(Phe) (4-demethylwyosine(37)-C(7)) aminocarboxypropyltransferase (249 aa).

Residues serine 80, arginine 87, glutamate 127, and 154-155 (DN) each bind S-adenosyl-L-methionine.

This sequence belongs to the class I-like SAM-binding methyltransferase superfamily. TRM5/TYW2 family.

Its subcellular location is the cytoplasm. The catalysed reaction is 4-demethylwyosine(37) in tRNA(Phe) + S-adenosyl-L-methionine = 4-demethyl-7-[(3S)-3-amino-3-carboxypropyl]wyosine(37) in tRNA(Phe) + S-methyl-5'-thioadenosine + H(+). Functionally, S-adenosyl-L-methionine-dependent transferase that acts as a component of the wyosine derivatives biosynthesis pathway. Catalyzes the transfer of the alpha-amino-alpha-carboxypropyl (acp) group from S-adenosyl-L-methionine to 4-demethylwyosine (imG-14), forming 7-aminocarboxypropyl-demethylwyosine (wybutosine-86) at position 37 of tRNA(Phe). The sequence is that of tRNA(Phe) (4-demethylwyosine(37)-C(7)) aminocarboxypropyltransferase from Methanocaldococcus jannaschii (strain ATCC 43067 / DSM 2661 / JAL-1 / JCM 10045 / NBRC 100440) (Methanococcus jannaschii).